Consider the following 263-residue polypeptide: MLATIDPIALRLGPISIHWYAICIVSGLLLAVYLAQRLAPEKGINPEHILDFILLAFPIAIVGARLYYVIFQWSYYSQNPSEIFAIWNGGIAIYGGLIAGAAVLYWFAKRHAIAVLDFLDIAAPGVMIAQSIGRWGNFVNQEAYGKAVSQLNYLPEIIRQQMFIDGSYRVPTFLYESLWNLVGFSIILGLRYFNKGLRQGDVTSFYLIWYGLGRFVIEGMRTDSLMFVGLRVSQWVSISIIILGAVLLYFRKQRQKADYKMKN.

Transmembrane regions (helical) follow at residues 15–35 (ISIHWYAICIVSGLLLAVYLA), 52–72 (FILLAFPIAIVGARLYYVIFQ), 83–103 (IFAIWNGGIAIYGGLIAGAAV), and 112–132 (AIAVLDFLDIAAPGVMIAQSI). Residue Arg-134 coordinates a 1,2-diacyl-sn-glycero-3-phospho-(1'-sn-glycerol). A run of 3 helical transmembrane segments spans residues 170–190 (VPTFLYESLWNLVGFSIILGL), 200–220 (GDVTSFYLIWYGLGRFVIEGM), and 227–247 (FVGLRVSQWVSISIIILGAVL).

It belongs to the Lgt family.

Its subcellular location is the cell membrane. It catalyses the reaction L-cysteinyl-[prolipoprotein] + a 1,2-diacyl-sn-glycero-3-phospho-(1'-sn-glycerol) = an S-1,2-diacyl-sn-glyceryl-L-cysteinyl-[prolipoprotein] + sn-glycerol 1-phosphate + H(+). It participates in protein modification; lipoprotein biosynthesis (diacylglyceryl transfer). Its function is as follows. Catalyzes the transfer of the diacylglyceryl group from phosphatidylglycerol to the sulfhydryl group of the N-terminal cysteine of a prolipoprotein, the first step in the formation of mature lipoproteins. The chain is Phosphatidylglycerol--prolipoprotein diacylglyceryl transferase from Streptococcus thermophilus (strain ATCC BAA-491 / LMD-9).